Consider the following 388-residue polypeptide: tRNA(Ile)-lysidine synthase (388 aa).

Residue 51-56 (SGGRDS) coordinates ATP.

This sequence belongs to the tRNA(Ile)-lysidine synthase family.

It localises to the cytoplasm. It carries out the reaction cytidine(34) in tRNA(Ile2) + L-lysine + ATP = lysidine(34) in tRNA(Ile2) + AMP + diphosphate + H(+). In terms of biological role, ligates lysine onto the cytidine present at position 34 of the AUA codon-specific tRNA(Ile) that contains the anticodon CAU, in an ATP-dependent manner. Cytidine is converted to lysidine, thus changing the amino acid specificity of the tRNA from methionine to isoleucine. The sequence is that of tRNA(Ile)-lysidine synthase from Bifidobacterium longum (strain NCC 2705).